Here is a 149-residue protein sequence, read N- to C-terminus: MRMNKQIVVTDWIKEKPRLGTFLKLTLNSDERRILRGKRLTDCDQEIILQLPRGGKLNDGDILSTNDSNFYVEIIAKTESLIEISSKSKLELIKTAYHLGNRHVEVEIEKDILLTKGDYLIENMLKNFNVEIVNIQKKFFPERGAHSHE.

This sequence belongs to the UreE family.

The protein localises to the cytoplasm. Its function is as follows. Involved in urease metallocenter assembly. Binds nickel. Probably functions as a nickel donor during metallocenter assembly. The chain is Urease accessory protein UreE from Prochlorococcus marinus (strain MIT 9215).